A 222-amino-acid polypeptide reads, in one-letter code: UPF0173 metal-dependent hydrolase Kcr_0055 (222 aa).

Belongs to the UPF0173 family.

In Korarchaeum cryptofilum (strain OPF8), this protein is UPF0173 metal-dependent hydrolase Kcr_0055.